The primary structure comprises 313 residues: Lactamase-like protein ptaB (313 aa).

Positions 104, 106, 108, and 109 each coordinate Zn(2+). Aspartate 108 acts as the Proton donor/acceptor in catalysis.

It belongs to the metallo-beta-lactamase superfamily. Requires Zn(2+) as cofactor.

It carries out the reaction atrochrysone carboxyl-[ACP] + H2O = atrochrysone carboxylate + holo-[ACP] + H(+). Its pathway is secondary metabolite biosynthesis. Its function is as follows. Lactamase-like protein; part of the gene cluster that mediates the biosynthesis of pestheic acid, a diphenyl ether which is a biosynthetic precursor of the unique chloropupukeananes. The biosynthesis initiates from condensation of acetate and malonate units catalyzed by the non-reducing PKS ptaA. As the ptaA protein is TE/CLC domain-deficient, hydrolysis and Claisen cyclization of the polyketide could be catalyzed by ptaB containing a beta-lactamase domain. The ptaB protein might hydrolyze the thioester bond between the ACP of ptaA and the intermediate to release atrochrysone carboxylic acid, which is spontaneously dehydrated to form endocrocin anthrone. Endocrocin anthrone is then converted to endocrocin, catalyzed by the anthrone oxygenase ptaC. Spontaneous decarboxylation of endocrocin occurs to generate emodin. An O-methyltransferase (ptaH or ptaI) could methylate emodin to form physcion. PtaJ could then catalyze the oxidative cleavage of physcion, and rotation of the intermediate could then afford desmethylisosulochrin. PtaF, a putative NADH-dependent oxidoreductase, might also participate in the oxidative cleavage step. Desmethylisosulochrin is then transformed by another O-methyltransferase (ptaH or ptaI) to form isosulochrin. Chlorination of isosulochrin by ptaM in the cyclohexadienone B ring then produces chloroisosulochrin. PtaE is responsible for the oxidative coupling reactions of both benzophenones isosulochrin and chloroisosulochrin to RES-1214-1 and pestheic acid respectively, regardless of chlorination. This is Lactamase-like protein ptaB from Pestalotiopsis fici (strain W106-1 / CGMCC3.15140).